The primary structure comprises 411 residues: Glutamate dehydrogenase 1, mitochondrial (411 aa).

The transit peptide at 1-18 directs the protein to the mitochondrion; that stretch reads MNALAATSRNFKQAAKLL. Residue lysine 102 is part of the active site.

The protein belongs to the Glu/Leu/Phe/Val dehydrogenases family.

The protein localises to the mitochondrion. It catalyses the reaction L-glutamate + NAD(+) + H2O = 2-oxoglutarate + NH4(+) + NADH + H(+). The enzyme catalyses L-glutamate + NADP(+) + H2O = 2-oxoglutarate + NH4(+) + NADPH + H(+). The protein is Glutamate dehydrogenase 1, mitochondrial (GDH1) of Oryza sativa subsp. indica (Rice).